The following is a 94-amino-acid chain: Small ribosomal subunit protein uS19 (94 aa).

Belongs to the universal ribosomal protein uS19 family.

Protein S19 forms a complex with S13 that binds strongly to the 16S ribosomal RNA. This is Small ribosomal subunit protein uS19 from Desulforamulus reducens (strain ATCC BAA-1160 / DSM 100696 / MI-1) (Desulfotomaculum reducens).